The chain runs to 764 residues: Cyclin-F (764 aa).

Positions 19–27 (RKRVRKRAS) match the Nuclear localization signal 1 motif. The 48-residue stretch at 28–75 (AVSLLSLPEELLVFVLQCLSAEDLLSVRAVHSHLCDIIDTNASIWARV) folds into the F-box domain. A Cyclin N-terminal domain is found at 307–404 (TKRYILVDWL…EVISVLDGKI (98 aa)). A D box 1 motif is present at residues 309-312 (RYIL). Residues 570 to 575 (SSKRRR) carry the Nuclear localization signal 2 motif. Positions 583–738 (RGAFVATPTA…PSQRIRRQVK (156 aa)) are PEST. The interval 662 to 754 (CEEDEQEPPT…HSAGEAEQED (93 aa)) is disordered. The span at 682 to 692 (SSSSTSSSSSS) shows a compositional bias: low complexity. The span at 702 to 722 (SGYSSIQSFPSPTGSSALVSP) shows a compositional bias: polar residues. Basic residues predominate over residues 732-742 (RIRRQVKRKNT).

The protein belongs to the cyclin family. Cyclin AB subfamily. As to quaternary structure, component of the SCF(CCNF) complex. Expressed in the brain.

The protein resides in the nucleus. The protein localises to the cytoplasm. Its subcellular location is the perinuclear region. It is found in the cytoskeleton. It localises to the microtubule organizing center. The protein resides in the centrosome. The protein localises to the centriole. Its function is as follows. Substrate recognition component of a SCF (SKP1-CUL1-F-box protein) E3 ubiquitin-protein ligase complex which mediates the ubiquitination and subsequent proteasomal degradation of target proteins. The SCF(CCNF) E3 ubiquitin-protein ligase complex is an integral component of the ubiquitin proteasome system (UPS) and links proteasome degradation to the cell cycle. Mediates the substrate recognition and the proteasomal degradation of various target proteins during G2 phase involved in the regulation of cell cycle progression and in the maintenance of genome stability. May play a role in motor neuron development and axonal outgrowth. This chain is Cyclin-F (ccnf), found in Danio rerio (Zebrafish).